Reading from the N-terminus, the 163-residue chain is Nucleotide-binding protein KPK_4305 (163 aa).

Belongs to the YajQ family.

Functionally, nucleotide-binding protein. This Klebsiella pneumoniae (strain 342) protein is Nucleotide-binding protein KPK_4305.